Reading from the N-terminus, the 177-residue chain is MSTHKWYAIQTYAGSEMAVKRAIENLVKDNGIEEQLKEIVVPTEDVIEFKNGKEKISERSLYSGYVFALLDLNTELWHRIQSLPKVGRFIGESKKPTPLTEKDINLILEKVHNRAAPKPKISFEEGENVRITEGPFANFTAIVEEYDMVRGLLKLNVSIFGRSTPVEILYSQVEKII.

One can recognise a KOW domain in the interval 125–150; it reads EGENVRITEGPFANFTAIVEEYDMVR.

It belongs to the NusG family.

In terms of biological role, participates in transcription elongation, termination and antitermination. The polypeptide is Transcription termination/antitermination protein NusG (Campylobacter jejuni subsp. jejuni serotype O:2 (strain ATCC 700819 / NCTC 11168)).